The primary structure comprises 428 residues: UPF0597 protein Dde_0807 (428 aa).

Belongs to the UPF0597 family.

This chain is UPF0597 protein Dde_0807, found in Oleidesulfovibrio alaskensis (strain ATCC BAA-1058 / DSM 17464 / G20) (Desulfovibrio alaskensis).